Here is a 206-residue protein sequence, read N- to C-terminus: Guanylate kinase (206 aa).

One can recognise a Guanylate kinase-like domain in the interval 6–184 (GTLYIISAPS…ALDDLKAIFR (179 aa)). 13-20 (APSGAGKS) provides a ligand contact to ATP.

This sequence belongs to the guanylate kinase family.

The protein localises to the cytoplasm. The catalysed reaction is GMP + ATP = GDP + ADP. In terms of biological role, essential for recycling GMP and indirectly, cGMP. The polypeptide is Guanylate kinase (Pseudomonas fluorescens (strain Pf0-1)).